Consider the following 240-residue polypeptide: Phosphoribosylaminoimidazole-succinocarboxamide synthase (240 aa).

It belongs to the SAICAR synthetase family.

The catalysed reaction is 5-amino-1-(5-phospho-D-ribosyl)imidazole-4-carboxylate + L-aspartate + ATP = (2S)-2-[5-amino-1-(5-phospho-beta-D-ribosyl)imidazole-4-carboxamido]succinate + ADP + phosphate + 2 H(+). It functions in the pathway purine metabolism; IMP biosynthesis via de novo pathway; 5-amino-1-(5-phospho-D-ribosyl)imidazole-4-carboxamide from 5-amino-1-(5-phospho-D-ribosyl)imidazole-4-carboxylate: step 1/2. In Wolbachia pipientis wMel, this protein is Phosphoribosylaminoimidazole-succinocarboxamide synthase.